A 200-amino-acid chain; its full sequence is Putative biotin transporter BioYB (200 aa).

6 helical membrane passes run 13 to 33, 36 to 56, 61 to 81, 90 to 110, 121 to 141, and 158 to 178; these read LIGM…VAPF, VAGI…LLLG, AIAM…FAQF, GKSG…GWFL, FLIA…TYMY, and WGFM…LSFI.

It belongs to the BioY family.

It is found in the cell membrane. In terms of biological role, putative biotin transporter. This is Putative biotin transporter BioYB (bioYB) from Bacillus subtilis (strain 168).